Consider the following 377-residue polypeptide: tRNA-specific 2-thiouridylase MnmA (377 aa).

Residues 22 to 29 (GMSGGVDS) and Met48 contribute to the ATP site. The interaction with target base in tRNA stretch occupies residues 108–110 (NPD). The active-site Nucleophile is Cys113. Cys113 and Cys210 are joined by a disulfide. ATP is bound at residue Gly138. The segment at 160–162 (KDQ) is interaction with tRNA. Residue Cys210 is the Cysteine persulfide intermediate of the active site. An interaction with tRNA region spans residues 322–323 (RY).

The protein belongs to the MnmA/TRMU family.

It localises to the cytoplasm. The enzyme catalyses S-sulfanyl-L-cysteinyl-[protein] + uridine(34) in tRNA + AH2 + ATP = 2-thiouridine(34) in tRNA + L-cysteinyl-[protein] + A + AMP + diphosphate + H(+). Catalyzes the 2-thiolation of uridine at the wobble position (U34) of tRNA, leading to the formation of s(2)U34. The protein is tRNA-specific 2-thiouridylase MnmA of Shewanella amazonensis (strain ATCC BAA-1098 / SB2B).